The following is a 388-amino-acid chain: Angiopoietin-related protein 5 (388 aa).

The signal sequence occupies residues 1 to 25 (MMSPSQASLLFLNVCIFICGEAVQG). Residue N53 is glycosylated (N-linked (GlcNAc...) asparagine). Positions 98 to 123 (LRNMMDEQQASLDYLSNQVNELMNRV) form a coiled coil. The Fibrinogen C-terminal domain maps to 141–383 (RPVQSHGLDC…SVSMKIRRMY (243 aa)). Residue N238 is glycosylated (N-linked (GlcNAc...) asparagine). 2 disulfides stabilise this stretch: C310/C314 and C324/C338. The N-linked (GlcNAc...) asparagine glycan is linked to N329.

Mainly expressed in adult heart.

It localises to the secreted. This is Angiopoietin-related protein 5 (ANGPTL5) from Homo sapiens (Human).